Reading from the N-terminus, the 475-residue chain is Ribulose bisphosphate carboxylase large chain (475 aa).

A propeptide spanning residues 1-2 (MS) is cleaved from the precursor. Proline 3 is modified (N-acetylproline). At lysine 14 the chain carries N6,N6,N6-trimethyllysine. Positions 123 and 173 each coordinate substrate. The active-site Proton acceptor is lysine 175. Residue lysine 177 participates in substrate binding. Mg(2+)-binding residues include lysine 201, aspartate 203, and glutamate 204. Lysine 201 carries the N6-carboxylysine modification. The active-site Proton acceptor is the histidine 294. Residues arginine 295, histidine 327, and serine 379 each coordinate substrate.

This sequence belongs to the RuBisCO large chain family. Type I subfamily. In terms of assembly, heterohexadecamer of 8 large chains and 8 small chains; disulfide-linked. The disulfide link is formed within the large subunit homodimers. Mg(2+) serves as cofactor. Post-translationally, the disulfide bond which can form in the large chain dimeric partners within the hexadecamer appears to be associated with oxidative stress and protein turnover.

It localises to the plastid. Its subcellular location is the chloroplast. The catalysed reaction is 2 (2R)-3-phosphoglycerate + 2 H(+) = D-ribulose 1,5-bisphosphate + CO2 + H2O. It catalyses the reaction D-ribulose 1,5-bisphosphate + O2 = 2-phosphoglycolate + (2R)-3-phosphoglycerate + 2 H(+). Functionally, ruBisCO catalyzes two reactions: the carboxylation of D-ribulose 1,5-bisphosphate, the primary event in carbon dioxide fixation, as well as the oxidative fragmentation of the pentose substrate in the photorespiration process. Both reactions occur simultaneously and in competition at the same active site. The chain is Ribulose bisphosphate carboxylase large chain from Adiantum capillus-veneris (Maidenhair fern).